The following is a 388-amino-acid chain: Succinate--CoA ligase [ADP-forming] subunit beta (388 aa).

The ATP-grasp domain occupies 9-244 (KEILRKFGVA…LDEEDPAEIE (236 aa)). ATP is bound by residues K46, 53-55 (GRG), E99, A102, and E107. Residues N199 and D213 each coordinate Mg(2+). Residues N264 and 321 to 323 (GIM) each bind substrate.

The protein belongs to the succinate/malate CoA ligase beta subunit family. In terms of assembly, heterotetramer of two alpha and two beta subunits. The cofactor is Mg(2+).

The enzyme catalyses succinate + ATP + CoA = succinyl-CoA + ADP + phosphate. The catalysed reaction is GTP + succinate + CoA = succinyl-CoA + GDP + phosphate. Its pathway is carbohydrate metabolism; tricarboxylic acid cycle; succinate from succinyl-CoA (ligase route): step 1/1. In terms of biological role, succinyl-CoA synthetase functions in the citric acid cycle (TCA), coupling the hydrolysis of succinyl-CoA to the synthesis of either ATP or GTP and thus represents the only step of substrate-level phosphorylation in the TCA. The beta subunit provides nucleotide specificity of the enzyme and binds the substrate succinate, while the binding sites for coenzyme A and phosphate are found in the alpha subunit. The protein is Succinate--CoA ligase [ADP-forming] subunit beta of Burkholderia ambifaria (strain MC40-6).